The primary structure comprises 205 residues: MKIKEAEFVISAVKGEQYPEDNLPEVALVGRSNVGKSSLINKLCNRRHLARTSSTPGKTQTLNFYRINQAAYIVDLPGYGYASVSKTQRASWGPMMEHYLKKRLQLRGVIQLVDIRHPPTKDDIAMREWLNHFKIGAAVIATKADKINRGRYAKHVKQIRQDLAIPKEIPIIVFSAETGHGKEDVLDLLDYFWNGIQPEEEREIL.

Positions 22–195 constitute an EngB-type G domain; the sequence is NLPEVALVGR…LDLLDYFWNG (174 aa). Residues 30-37, 57-61, 75-78, 142-145, and 174-176 each bind GTP; these read GRSNVGKS, GKTQT, DLPG, TKAD, and FSA. Residues S37 and T59 each contribute to the Mg(2+) site.

This sequence belongs to the TRAFAC class TrmE-Era-EngA-EngB-Septin-like GTPase superfamily. EngB GTPase family. Mg(2+) serves as cofactor.

In terms of biological role, necessary for normal cell division and for the maintenance of normal septation. The sequence is that of Probable GTP-binding protein EngB from Heliobacterium modesticaldum (strain ATCC 51547 / Ice1).